Consider the following 1669-residue polypeptide: Collagen alpha-1(IV) chain (1669 aa).

The N-terminal stretch at 1–27 (MGPRLSVWLLLLPAALLLHEEHSRAAA) is a signal peptide. The propeptide at 28-172 (KGGCAGSGCG…LGHVPGMLLK (145 aa)) is N-terminal propeptide (7S domain). 3 disordered regions span residues 48 to 459 (KGER…EIGE), 504 to 1382 (GRDG…PKGQ), and 1404 to 1431 (PGQK…DGLP). Residue N126 is glycosylated (N-linked (GlcNAc...) asparagine). Residues 173 to 1440 (GERGFPGIPG…PGSMGPPGTP (1268 aa)) are triple-helical region. Positions 196-214 (VGPPGFTGPPGPPGPPGPP) are enriched in pro residues. 3-hydroxyproline occurs at positions 204, 207, and 210. Low complexity predominate over residues 234 to 249 (QGVSGPPGVPGQAQVQ). 2 stretches are compositionally biased toward basic and acidic residues: residues 250-263 (EKGD…KGQK) and 289-298 (PGKDGDKGEK). 3 stretches are compositionally biased toward pro residues: residues 367–376 (PGQPGPPGLP), 413–424 (PGPPGSPGPPGQ), and 436–448 (PGPP…PGIP). Over residues 535 to 545 (FDLRLKGDKGD) the composition is skewed to basic and acidic residues. Positions 586-595 (GPPGGVGFPG) are enriched in gly residues. P587 and P602 each carry 3-hydroxyproline. At P603 the chain carries 4-hydroxyproline. Position 605 is a 3-hydroxyproline (P605). P606 is modified (4-hydroxyproline). A compositionally biased stretch (low complexity) spans 611–620 (AGPIGDKGQA). A compositionally biased stretch (gly residues) spans 621-630 (GFPGGPGSPG). 4-hydroxyproline is present on residues P623, P626, P629, and P632. Residue P647 is modified to 3-hydroxyproline. A compositionally biased stretch (gly residues) spans 797–817 (GVPGIGPPGARGPPGGQGPPG). Low complexity-rich tracts occupy residues 856–875 (QSGL…PGFP) and 977–986 (PGKDGQAGQP). Residues 1011–1020 (GSVGGMGLPG) show a composition bias toward gly residues. Over residues 1086-1114 (SIGIPGMPGSPGLKGSPGSVGYPGSPGLP) the composition is skewed to low complexity. The residue at position 1214 (P1214) is a 3-hydroxyproline. The segment covering 1247–1258 (PGLPGPMGPPGL) has biased composition (pro residues). Positions 1290–1299 (GMPGIGGSPG) are enriched in gly residues. The segment covering 1368–1382 (PGLKGLQGLPGPKGQ) has biased composition (low complexity). A 3-hydroxyproline modification is found at P1424. Residues 1445–1669 (GFLVTRHSQT…SRCQVCMRRT (225 aa)) enclose the Collagen IV NC1 domain. Intrachain disulfides connect C1460–C1551, C1493–C1548, C1505–C1511, C1570–C1665, C1604–C1662, and C1616–C1622. M1533 participates in a covalent cross-link: S-Lysyl-methionine sulfilimine (Met-Lys) (interchain with K-1651). An S-Lysyl-methionine sulfilimine (Lys-Met) (interchain with M-1533) cross-link involves residue K1651.

Belongs to the type IV collagen family. In terms of assembly, there are six type IV collagen isoforms, alpha 1(IV)-alpha 6(IV), each of which can form a triple helix structure with 2 other chains to generate type IV collagen network. Interacts with EFEMP2. Lysines at the third position of the tripeptide repeating unit (G-X-Y) are hydroxylated. The modified lysines can be O-glycosylated. Post-translationally, contains 4-hydroxyproline. Prolines at the third position of the tripeptide repeating unit (G-X-Y) are hydroxylated in some or all of the chains. In terms of processing, contains 3-hydroxyproline. This modification occurs on the first proline residue in the sequence motif Gly-Pro-Hyp, where Hyp is 4-hydroxyproline. Type IV collagens contain numerous cysteine residues which are involved in inter- and intramolecular disulfide bonding. 12 of these, located in the NC1 domain, are conserved in all known type IV collagens. Post-translationally, the trimeric structure of the NC1 domains is stabilized by covalent bonds (sulfilimine cross-links) between Lys and Met residues. These cross-links are important for the mechanical stability of the basement membrane. Sulfilimine cross-link is catalyzed by PXDN. In terms of processing, proteolytic processing produces the C-terminal NC1 peptide, arresten. In terms of tissue distribution, highly expressed in placenta.

Its subcellular location is the secreted. The protein resides in the extracellular space. It is found in the extracellular matrix. The protein localises to the basement membrane. Its function is as follows. Type IV collagen is the major structural component of glomerular basement membranes (GBM), forming a 'chicken-wire' meshwork together with laminins, proteoglycans and entactin/nidogen. Functionally, arresten, comprising the C-terminal NC1 domain, inhibits angiogenesis and tumor formation. The C-terminal half is found to possess the anti-angiogenic activity. Specifically inhibits endothelial cell proliferation, migration and tube formation. This is Collagen alpha-1(IV) chain from Homo sapiens (Human).